The primary structure comprises 470 residues: Tert-butanol monooxygenase / tert-amyl alcohol desaturase oxygenase subunit (470 aa).

The Rieske domain maps to Trp-51–Ala-155. [2Fe-2S] cluster-binding residues include Cys-91, His-93, Cys-110, and His-113.

Belongs to the bacterial ring-hydroxylating dioxygenase alpha subunit family. In terms of assembly, this two-component enzyme is composed of an oxygenase (MdpJ) and a reductase (MdpK). [2Fe-2S] cluster is required as a cofactor.

The enzyme catalyses tert-butanol + NADPH + O2 + H(+) = 2-methylpropane-1,2-diol + NADP(+) + H2O. The catalysed reaction is 2-methylbutan-2-ol + NADPH + O2 + H(+) = 3-hydroxy-3-methylbut-1-ene + NADP(+) + 2 H2O. Its function is as follows. Oxygenase component of a two-component system involved in the degradation of tertiary alcohols such as tert-butyl alcohol (TBA) and tert-amyl alcohol (TAA). In the presence of TBA, catalyzes the hydroxylation of TBA to 2-methylpropane-1,2-diol. In the presence of TAA, functions as a desaturase, enabling the degradation of TAA and resulting in the formation of the hemiterpene 3-hydroxy-3-methylbut-1-ene. The specificity of the catalysis depends strongly on the molecule structure of the substrate, allowing either hydroxylation or desaturation reactions. Also catalyzes the desaturation of the tertiary alcohol 3-methyl-3-pentanol (a C6 homolog of TBA and TAA) to 3-methyl-1-penten-3-ol, with lower efficiency. In addition, can transform some secondary alcohols, including the hydroxylation of 2-propanol to 1,2-propanediol, and the desaturation of 2-butanol, 3-methyl-2-butanol and 3-pentanol. The chain is Tert-butanol monooxygenase / tert-amyl alcohol desaturase oxygenase subunit from Aquincola tertiaricarbonis.